Here is a 261-residue protein sequence, read N- to C-terminus: Orotidine 5'-phosphate decarboxylase (261 aa).

Residues D34, 56–58 (KTH), 88–97 (DRKFADIGNT), Y214, and R232 each bind substrate. The active-site Proton donor is K90.

Belongs to the OMP decarboxylase family.

The enzyme catalyses orotidine 5'-phosphate + H(+) = UMP + CO2. It functions in the pathway pyrimidine metabolism; UMP biosynthesis via de novo pathway; UMP from orotate: step 2/2. This Kodamaea ohmeri (Yeast) protein is Orotidine 5'-phosphate decarboxylase (URA3).